Reading from the N-terminus, the 567-residue chain is DNA ligase B (567 aa).

The N6-AMP-lysine intermediate role is filled by lysine 126.

The protein belongs to the NAD-dependent DNA ligase family. LigB subfamily.

It catalyses the reaction NAD(+) + (deoxyribonucleotide)n-3'-hydroxyl + 5'-phospho-(deoxyribonucleotide)m = (deoxyribonucleotide)n+m + AMP + beta-nicotinamide D-nucleotide.. Catalyzes the formation of phosphodiester linkages between 5'-phosphoryl and 3'-hydroxyl groups in double-stranded DNA using NAD as a coenzyme and as the energy source for the reaction. The sequence is that of DNA ligase B from Pseudomonas putida (strain W619).